Here is a 399-residue protein sequence, read N- to C-terminus: 1-deoxy-D-xylulose 5-phosphate reductoisomerase (399 aa).

5 residues coordinate NADPH: Thr-13, Gly-14, Ser-15, Ile-16, and Asn-127. Lys-128 provides a ligand contact to 1-deoxy-D-xylulose 5-phosphate. Glu-129 is an NADPH binding site. Asp-153 contributes to the Mn(2+) binding site. Positions 154, 155, 187, and 210 each coordinate 1-deoxy-D-xylulose 5-phosphate. Residue Glu-155 participates in Mn(2+) binding. Residue Gly-216 participates in NADPH binding. Ser-223, Asn-228, Lys-229, and Glu-232 together coordinate 1-deoxy-D-xylulose 5-phosphate. Glu-232 provides a ligand contact to Mn(2+).

This sequence belongs to the DXR family. Requires Mg(2+) as cofactor. The cofactor is Mn(2+).

The catalysed reaction is 2-C-methyl-D-erythritol 4-phosphate + NADP(+) = 1-deoxy-D-xylulose 5-phosphate + NADPH + H(+). The protein operates within isoprenoid biosynthesis; isopentenyl diphosphate biosynthesis via DXP pathway; isopentenyl diphosphate from 1-deoxy-D-xylulose 5-phosphate: step 1/6. Catalyzes the NADPH-dependent rearrangement and reduction of 1-deoxy-D-xylulose-5-phosphate (DXP) to 2-C-methyl-D-erythritol 4-phosphate (MEP). This chain is 1-deoxy-D-xylulose 5-phosphate reductoisomerase, found in Bordetella avium (strain 197N).